A 4568-amino-acid chain; its full sequence is Dynein beta chain, flagellar outer arm (4568 aa).

The segment at 1 to 1880 (MAEDEGMTAA…QVNICDAEIA (1880 aa)) is stem. Coiled-coil stretches lie at residues 277–293 (FQRL…EAND), 1158–1175 (EEAA…RKAL), 1372–1400 (KIDV…RNYD), 1614–1650 (EACT…RVAF), and 1778–1825 (QEIN…RKKL). A disordered region spans residues 1144–1166 (GVEEEPEYHPDQDPEEAAAKKAA). Positions 1150–1166 (EYHPDQDPEEAAAKKAA) are enriched in basic and acidic residues. AAA regions lie at residues 1881-2102 (YSYE…TLYV), 2164-2385 (EAAH…RNFK), 2493-2738 (QYIP…ITQG), and 2841-3090 (EYNE…FRRY). ATP is bound by residues 1919-1926 (GPAGTGKT), 2202-2209 (GAAGCGKT), and 2530-2537 (GNTGTGKS). Residues 2831 to 2848 (LRKTLEDKLREYNESNAV) adopt a coiled-coil conformation. Residue 2879-2886 (GVGGSGKQ) participates in ATP binding. 3 coiled-coil regions span residues 3106 to 3162 (KMLL…DELI), 3339 to 3425 (KRAA…RLES), and 3648 to 3728 (HERP…KARE). Positions 3106 to 3425 (KMLLQLKRDD…WGAEIKRLES (320 aa)) are stalk. AAA regions lie at residues 3481–3711 (LTDD…EIEE) and 3937–4172 (MGRF…TANN).

It belongs to the dynein heavy chain family. As to quaternary structure, consists of at least 3 heavy chains (alpha, beta and gamma), 2 intermediate chains and 8 light chains.

It is found in the cell projection. Its subcellular location is the cilium. It localises to the flagellum. The protein resides in the cytoplasm. The protein localises to the cytoskeleton. It is found in the flagellum axoneme. Its function is as follows. Force generating protein of eukaryotic cilia and flagella. Produces force towards the minus ends of microtubules. Dynein has ATPase activity; the force-producing power stroke is thought to occur on release of ADP. This chain is Dynein beta chain, flagellar outer arm (ODA4), found in Chlamydomonas reinhardtii (Chlamydomonas smithii).